We begin with the raw amino-acid sequence, 180 residues long: 3-hydroxyanthranilate 3,4-dioxygenase (180 aa).

An O2-binding site is contributed by Arg-46. Fe cation contacts are provided by His-50, Glu-56, and His-94. Glu-56 lines the substrate pocket. Positions 98 and 109 each coordinate substrate. Residues Cys-124, Cys-127, Cys-161, and Cys-164 each contribute to the Fe cation site.

This sequence belongs to the 3-HAO family. As to quaternary structure, homodimer. It depends on Fe(2+) as a cofactor.

It catalyses the reaction 3-hydroxyanthranilate + O2 = (2Z,4Z)-2-amino-3-carboxymuconate 6-semialdehyde. Its pathway is cofactor biosynthesis; NAD(+) biosynthesis; quinolinate from L-kynurenine: step 3/3. Functionally, catalyzes the oxidative ring opening of 3-hydroxyanthranilate to 2-amino-3-carboxymuconate semialdehyde, which spontaneously cyclizes to quinolinate. This is 3-hydroxyanthranilate 3,4-dioxygenase from Jannaschia sp. (strain CCS1).